The chain runs to 84 residues: ATP synthase subunit c (84 aa).

The next 2 membrane-spanning stretches (helical) occupy residues 9-29 and 54-74; these read IIGA…GFAI and IVAG…LLFI.

Belongs to the ATPase C chain family. As to quaternary structure, F-type ATPases have 2 components, F(1) - the catalytic core - and F(0) - the membrane proton channel. F(1) has five subunits: alpha(3), beta(3), gamma(1), delta(1), epsilon(1). F(0) has three main subunits: a(1), b(2) and c(10-14). The alpha and beta chains form an alternating ring which encloses part of the gamma chain. F(1) is attached to F(0) by a central stalk formed by the gamma and epsilon chains, while a peripheral stalk is formed by the delta and b chains.

Its subcellular location is the cell inner membrane. Its function is as follows. F(1)F(0) ATP synthase produces ATP from ADP in the presence of a proton or sodium gradient. F-type ATPases consist of two structural domains, F(1) containing the extramembraneous catalytic core and F(0) containing the membrane proton channel, linked together by a central stalk and a peripheral stalk. During catalysis, ATP synthesis in the catalytic domain of F(1) is coupled via a rotary mechanism of the central stalk subunits to proton translocation. Key component of the F(0) channel; it plays a direct role in translocation across the membrane. A homomeric c-ring of between 10-14 subunits forms the central stalk rotor element with the F(1) delta and epsilon subunits. The chain is ATP synthase subunit c from Haemophilus influenzae (strain ATCC 51907 / DSM 11121 / KW20 / Rd).